Here is a 139-residue protein sequence, read N- to C-terminus: ATP synthase epsilon chain 2 (139 aa).

The protein belongs to the ATPase epsilon chain family. F-type ATPases have 2 components, CF(1) - the catalytic core - and CF(0) - the membrane proton channel. CF(1) has five subunits: alpha(3), beta(3), gamma(1), delta(1), epsilon(1). CF(0) has three main subunits: a, b and c.

The protein localises to the cell inner membrane. Produces ATP from ADP in the presence of a proton gradient across the membrane. The polypeptide is ATP synthase epsilon chain 2 (Paraburkholderia xenovorans (strain LB400)).